The sequence spans 303 residues: Mitochondrial carrier homolog 2 (303 aa).

An N-acetylalanine modification is found at Ala2. Topologically, residues Ala2–Thr15 are mitochondrial intermembrane. Solcar repeat units follow at residues Ala2 to Ser98 and Asp118 to Tyr206. The helical transmembrane segment at Ile16–Pro36 threads the bilayer. The Cytoplasmic portion of the chain corresponds to Pro37–Arg77. A helical membrane pass occupies residues Leu78–Leu92. Over Gln93–Thr135 the chain is Mitochondrial intermembrane. A helical membrane pass occupies residues Leu136–Glu156. Over Ser157 to Ala180 the chain is Cytoplasmic. Residues Gly181–Leu199 form a helical membrane-spanning segment. The Mitochondrial intermembrane portion of the chain corresponds to Ala200–Ser231. Residues Met232–Ala252 form a helical membrane-spanning segment. Residues Gly253–Arg280 lie on the Cytoplasmic side of the membrane. A helical membrane pass occupies residues Gly281–Ile303.

The protein belongs to the mitochondrial carrier (TC 2.A.29) family. In terms of assembly, interacts with p15BID. In terms of tissue distribution, expressed in a wide variety of tissues. Predominant expressed in liver, kidney, heart, skeletal muscle and testis.

It is found in the mitochondrion outer membrane. Its function is as follows. Protein insertase that mediates insertion of transmembrane proteins into the mitochondrial outer membrane. Catalyzes insertion of proteins with alpha-helical transmembrane regions, such as signal-anchored, tail-anchored and multi-pass membrane proteins. Does not mediate insertion of beta-barrel transmembrane proteins. Also acts as a receptor for the truncated form of pro-apoptotic BH3-interacting domain death agonist (p15 BID) and has therefore a critical function in apoptosis. Regulates the quiescence/cycling of hematopoietic stem cells (HSCs). Acts as a regulator of mitochondrial fusion, essential for the naive-to-primed interconversion of embryonic stem cells (ESCs). Acts as a regulator of lipid homeostasis and has a regulatory role in adipocyte differentiation and biology. In Mus musculus (Mouse), this protein is Mitochondrial carrier homolog 2.